A 434-amino-acid chain; its full sequence is Enolase A (434 aa).

Residues H160 and E169 each contribute to the substrate site. E212 (proton donor) is an active-site residue. Mg(2+) is bound by residues D247, E296, and D321. Positions 296 and 321 each coordinate substrate. K346 functions as the Proton acceptor in the catalytic mechanism. Substrate-binding positions include 373 to 376 and K397; that span reads SHRS.

Belongs to the enolase family. In terms of assembly, homodimer. Mg(2+) serves as cofactor.

The protein localises to the cytoplasm. It carries out the reaction (2R)-2-phosphoglycerate = phosphoenolpyruvate + H2O. It functions in the pathway carbohydrate degradation; glycolysis; pyruvate from D-glyceraldehyde 3-phosphate: step 4/5. This Dictyostelium discoideum (Social amoeba) protein is Enolase A (enoA).